The primary structure comprises 283 residues: Prepilin leader peptidase/N-methyltransferase (283 aa).

7 helical membrane-spanning segments follow: residues 13-33 (VWLLALLLLGLIIGSFLNVVI), 106-126 (WRYPLIELLSGLSFLLAGLLW), 128-148 (PGLALLGALLCFGIFVALAAI), 153-173 (QLLPDVMTLPLLWGGLLFNLA), 176-196 (FVPLEQAVVGAVAGYLSLWLI), 216-236 (LLAALGAWLGWQALPNLVLIA), and 259-279 (LAFGPWLAVSGAMGLVLNVLG).

It belongs to the peptidase A24 family.

Its subcellular location is the cell inner membrane. The catalysed reaction is Typically cleaves a -Gly-|-Phe- bond to release an N-terminal, basic peptide of 5-8 residues from type IV prepilin, and then N-methylates the new N-terminal amino group, the methyl donor being S-adenosyl-L-methionine.. Its function is as follows. Plays a role in type II pseudopili formation by proteolytically removing the leader sequence from substrate proteins and subsequently monomethylating the alpha-amino group of the newly exposed N-terminal phenylalanine. Substrates include proteins required for biogenesis of the type II general secretory apparatus. This chain is Prepilin leader peptidase/N-methyltransferase (outO), found in Dickeya chrysanthemi (Pectobacterium chrysanthemi).